The following is a 90-amino-acid chain: Acylphosphatase (90 aa).

One can recognise an Acylphosphatase-like domain in the interval 3 to 90 (QYRIIVDGRV…DGFQKFNISY (88 aa)). Catalysis depends on residues Arg-18 and Asn-36.

This sequence belongs to the acylphosphatase family.

It catalyses the reaction an acyl phosphate + H2O = a carboxylate + phosphate + H(+). The protein is Acylphosphatase (acyP) of Bacillus licheniformis (strain ATCC 14580 / DSM 13 / JCM 2505 / CCUG 7422 / NBRC 12200 / NCIMB 9375 / NCTC 10341 / NRRL NRS-1264 / Gibson 46).